The primary structure comprises 481 residues: Proline--tRNA ligase (481 aa).

The protein belongs to the class-II aminoacyl-tRNA synthetase family. ProS type 3 subfamily. As to quaternary structure, homodimer.

It is found in the cytoplasm. It catalyses the reaction tRNA(Pro) + L-proline + ATP = L-prolyl-tRNA(Pro) + AMP + diphosphate. In terms of biological role, catalyzes the attachment of proline to tRNA(Pro) in a two-step reaction: proline is first activated by ATP to form Pro-AMP and then transferred to the acceptor end of tRNA(Pro). This is Proline--tRNA ligase from Prosthecochloris aestuarii (strain DSM 271 / SK 413).